A 2035-amino-acid chain; its full sequence is Ral GTPase-activating protein subunit alpha-1 (2035 aa).

2 disordered regions span residues leucine 343–cysteine 384 and aspartate 477–serine 496. Positions serine 345–glutamine 365 are enriched in basic and acidic residues. Polar residues-rich tracts occupy residues serine 366–cysteine 384 and glycine 486–serine 496. Phosphoserine occurs at positions 710 and 720. The disordered stretch occupies residues serine 714 to lysine 752. Threonine 753 is modified (phosphothreonine). Serine 772 is subject to Phosphoserine. Position 777 is a phosphothreonine (threonine 777). At serine 796 the chain carries Phosphoserine. The segment covering glutamate 807–serine 817 has biased composition (basic and acidic residues). Disordered stretches follow at residues glutamate 807–valine 834 and serine 848–aspartate 911. Composition is skewed to polar residues over residues asparagine 824 to asparagine 833 and glycine 849 to glycine 862. A phosphoserine mark is found at serine 859, serine 860, and serine 863. Over residues serine 894 to aspartate 911 the composition is skewed to low complexity. Residues serine 985, serine 989, serine 993, and serine 999 each carry the phosphoserine modification. The segment covering glutamate 986–serine 1008 has biased composition (polar residues). The interval glutamate 986–histidine 1011 is disordered. Threonine 1001 carries the post-translational modification Phosphothreonine. Serine 1003 and serine 1477 each carry phosphoserine. The interval phenylalanine 1326–histidine 2035 is minimal domain that binds to TCF3/E12. Residues serine 1713–glutamate 1748 are a coiled coil. Residues leucine 1795–isoleucine 2003 enclose the Rap-GAP domain.

Component of the heterodimeric RalGAP1 complex with RALGAPB. Heterodimerization is required for activity. Interacts with the HLH region of TCF3/isoform E12. As to expression, expressed during embryogenesis. Expressed in the adult brain, particularly in neurons of the cortex and hippocampus.

Its subcellular location is the cytoplasm. The protein localises to the nucleus. Catalytic subunit of the heterodimeric RalGAP1 complex which acts as a GTPase activator for the Ras-like small GTPases RALA and RALB. May interact with the HLH region of TCF3/isoform E12. The protein is Ral GTPase-activating protein subunit alpha-1 (Ralgapa1) of Mus musculus (Mouse).